The chain runs to 208 residues: Transcription factor atf-4 homolog (208 aa).

2 disordered regions span residues 18 to 47 and 106 to 165; these read HNQTHSTPQYHNHHHHHHQSPTYPQSYFNP and ERRS…EKEE. The segment covering 110 to 120 has biased composition (low complexity); that stretch reads NSSASPASNWS. The segment covering 121–141 has biased composition (basic and acidic residues); sequence SDEHDSQSEKSYHPYKTPEKK. The bZIP domain occupies 138–201; sequence PEKKERKKAQ…RYFKKFMTEM (64 aa). A basic motif region spans residues 140 to 163; the sequence is KKERKKAQNRLAATRYREKKRREK. Residues 173-187 are leucine-zipper; sequence LSVTNGKLKDQVSEL.

It belongs to the bZIP family.

The protein localises to the nucleus. In terms of biological role, transcription factor. Involved in positively modulating longevity and stress tolerance, probably acting by positively regulating expression of transsulfuration enzyme cth-2, leading to increased hydrogen sulfide production and therefore increased protein persulfidation, a protective modification of redox-reactive cysteines. May mediate longevity and increased stress resistance induced by mTORC1 suppression. The polypeptide is Transcription factor atf-4 homolog (Caenorhabditis elegans).